The sequence spans 124 residues: Small ribosomal subunit protein uS12 (124 aa).

The disordered stretch occupies residues 1–28 (MPTIQQLIRSERSKAKKKTKSPALKQCP). Asp-89 carries the 3-methylthioaspartic acid modification. The interval 101 to 124 (TLDAQGVKDRKQGRSKYGTKKPKE) is disordered. Positions 113-124 (GRSKYGTKKPKE) are enriched in basic residues.

This sequence belongs to the universal ribosomal protein uS12 family. In terms of assembly, part of the 30S ribosomal subunit. Contacts proteins S8 and S17. May interact with IF1 in the 30S initiation complex.

Functionally, with S4 and S5 plays an important role in translational accuracy. In terms of biological role, interacts with and stabilizes bases of the 16S rRNA that are involved in tRNA selection in the A site and with the mRNA backbone. Located at the interface of the 30S and 50S subunits, it traverses the body of the 30S subunit contacting proteins on the other side and probably holding the rRNA structure together. The combined cluster of proteins S8, S12 and S17 appears to hold together the shoulder and platform of the 30S subunit. The protein is Small ribosomal subunit protein uS12 of Crocosphaera subtropica (strain ATCC 51142 / BH68) (Cyanothece sp. (strain ATCC 51142)).